A 448-amino-acid chain; its full sequence is MANVVENLGKLERRVTISLPKDTVQKEIDARIQKLAKNVRMPGFRPGKVPLKMVAQQYSGQVEAEVLSDKIGQEFFTISRAENLRVAGQPSFEPKQEQAEDAYAFDATFEVYPEVKIGDLATAEVERSTTSIGDAEIDRTLDILRKQRVHYHARGEAGEHGDGGADTAAKDGDRVTVDFVGKIDDVAFQGGTAEDFPFVLGEGRMLPEFETAALGLKVGEQRTFDLKFPDDYHGKDVAGKTAQFTVTMKKIEWPHLPEIDAEFAKSLGIEDGDLTKMRAEIKENLEREAKRRTQSIVKNQVMDALLKISELDVPKALIEQDQQRLVEMARQDLAQRGVPNAKDAPIPAEMFAEQAERRVKLGLVLAELVKANGLEAKPEQIRAEVDEFAKSYEDPKEVVRWYYSNQQRLAEMEAFVVESNVVDFVLGKAKVTDKEVSFEALASASSQA.

Residues 172-257 form the PPIase FKBP-type domain; it reads GDRVTVDFVG…MKKIEWPHLP (86 aa).

Belongs to the FKBP-type PPIase family. Tig subfamily.

Its subcellular location is the cytoplasm. It catalyses the reaction [protein]-peptidylproline (omega=180) = [protein]-peptidylproline (omega=0). Involved in protein export. Acts as a chaperone by maintaining the newly synthesized protein in an open conformation. Functions as a peptidyl-prolyl cis-trans isomerase. The sequence is that of Trigger factor from Burkholderia ambifaria (strain ATCC BAA-244 / DSM 16087 / CCUG 44356 / LMG 19182 / AMMD) (Burkholderia cepacia (strain AMMD)).